The primary structure comprises 650 residues: MTPLLELKDIRRSYPAGDEQVEVLKGITLDIYAGEMVAIVGASGSGKSTLMNILGCLDKATSGTYRVAGQDVATLDADALAQLHREHFGFIFQRYHLLSHLTAEQNVEVPAVYAGLERKQRLLRAQELLQRLGLEDRTEYYPAQLSGGQQQRVSIARALMNGGQVILADEPTGALDSHSGEEVMAILHQLRDRGHTVIIVTHDPQVAAQAERVIEIRDGEIVRNPPAIDKVNVAGGTEPVVNTVSGWRQFVSGFNEALTMAWRALAANKMRTLLTMLGIIIGIASVVSIVVVGDAAKQMVLADIRSIGTNTIDVYPGKDFGDDDPQYQQALKYDDLIAIQKQPWVASATPAVSQNLRLRYNNVDVAASANGVSGDYFNVYGMTFSEGNTFNQEQLNGRAQVVVLDSNIRRQLFPHKADVVGEVILVGNMPARVIGVAEEKQSMLGSSKVLRVWLPYSTMSGRVMGQSWLNSITVRVKEGFDSAEAEQQLTRLLSLRHGKKDFFTWNMDGVLKTVEKTTRTLQLFLTLVAVISLVVGGIGVMNIMLVSVTERTSANDIPMDVGAGASYVLYHLFFRYPCKVLPAVGGALGITLSLLIAFTLQLFLPGWEIGFSPLALLLAFLCSTVTGILFGWLPARNAARLDPVDVLARE.

Positions 5–243 (LELKDIRRSY…AGGTEPVVNT (239 aa)) constitute an ABC transporter domain. An ATP-binding site is contributed by 41 to 48 (GASGSGKS). 5 consecutive transmembrane segments (helical) span residues 273–293 (LLTM…VVVG), 523–543 (LFLT…VMNI), 554–574 (ANDI…HLFF), 580–600 (VLPA…AFTL), and 613–633 (PLAL…FGWL).

The protein belongs to the ABC transporter superfamily. Macrolide exporter (TC 3.A.1.122) family. In terms of assembly, homodimer. Part of the tripartite efflux system MacAB-TolC, which is composed of an inner membrane transporter, MacB, a periplasmic membrane fusion protein, MacA, and an outer membrane component, TolC. The complex forms a large protein conduit and can translocate molecules across both the inner and outer membranes. Interacts with MacA.

The protein resides in the cell inner membrane. Its function is as follows. Part of the tripartite efflux system MacAB-TolC. MacB is a non-canonical ABC transporter that contains transmembrane domains (TMD), which form a pore in the inner membrane, and an ATP-binding domain (NBD), which is responsible for energy generation. Confers resistance against macrolides. This Shigella dysenteriae serotype 1 (strain Sd197) protein is Macrolide export ATP-binding/permease protein MacB.